Reading from the N-terminus, the 460-residue chain is Probable glucan endo-1,3-beta-glucosidase eglC (460 aa).

Positions 1-18 (MQLAQLAAFAMTLATSEA) are cleaved as a signal peptide. E128 (proton donor) is an active-site residue. Residue N183 is glycosylated (N-linked (GlcNAc...) asparagine). Catalysis depends on E239, which acts as the Nucleophile. N-linked (GlcNAc...) asparagine glycosylation is found at N312, N367, and N373. The interval 379-437 (RPSGSASARPSAGAISSGSGSSSSGSGSSGSTGTSATSGQSSSSGSSAAAGSSSPAAFS) is disordered. Low complexity predominate over residues 380–437 (PSGSASARPSAGAISSGSGSSSSGSGSSGSTGTSATSGQSSSSGSSAAAGSSSPAAFS). Residue S430 is the site of GPI-anchor amidated serine attachment. Positions 431–460 (SSPAAFSGASTLSGSLFGAVVAVFMTLAAL) are cleaved as a propeptide — removed in mature form.

This sequence belongs to the glycosyl hydrolase 17 family. The GPI-anchor is attached to the protein in the endoplasmic reticulum and serves to target the protein to the cell surface. There, the glucosamine-inositol phospholipid moiety is cleaved off and the GPI-modified mannoprotein is covalently attached via its lipidless GPI glycan remnant to the 1,6-beta-glucan of the outer cell wall layer.

It localises to the cell membrane. It is found in the secreted. The protein resides in the cell wall. It catalyses the reaction Hydrolysis of (1-&gt;3)-beta-D-glucosidic linkages in (1-&gt;3)-beta-D-glucans.. Glucanases play a role in cell expansion during growth, in cell-cell fusion during mating, and in spore release during sporulation. This enzyme may be involved in beta-glucan degradation and also function biosynthetically as a transglycosylase. The protein is Probable glucan endo-1,3-beta-glucosidase eglC (eglC) of Aspergillus niger (strain ATCC MYA-4892 / CBS 513.88 / FGSC A1513).